We begin with the raw amino-acid sequence, 803 residues long: Exo-1,4-beta-xylosidase xlnD (803 aa).

The signal sequence occupies residues M1–S18. 6 N-linked (GlcNAc...) asparagine glycosylation sites follow: N21, N44, N85, N122, N140, and N234. D307 is a catalytic residue. Residues N437, N474, N515, N611, N676, and N698 are each glycosylated (N-linked (GlcNAc...) asparagine).

This sequence belongs to the glycosyl hydrolase 3 family.

It is found in the secreted. The catalysed reaction is Hydrolysis of (1-&gt;4)-beta-D-xylans, to remove successive D-xylose residues from the non-reducing termini.. Its pathway is glycan degradation; xylan degradation. In terms of biological role, xylan 1,4-beta-xylosidase involved in the hydrolysis of xylan, a major structural heterogeneous polysaccharide found in plant biomass representing the second most abundant polysaccharide in the biosphere, after cellulose. The sequence is that of Exo-1,4-beta-xylosidase xlnD (xlnD) from Emericella nidulans (strain FGSC A4 / ATCC 38163 / CBS 112.46 / NRRL 194 / M139) (Aspergillus nidulans).